Consider the following 451-residue polypeptide: Phosphoglucosamine mutase (451 aa).

Ser102 serves as the catalytic Phosphoserine intermediate. The Mg(2+) site is built by Ser102, Asp244, Asp246, and Asp248. A Phosphoserine modification is found at Ser102.

This sequence belongs to the phosphohexose mutase family. Mg(2+) is required as a cofactor. Activated by phosphorylation.

The catalysed reaction is alpha-D-glucosamine 1-phosphate = D-glucosamine 6-phosphate. Functionally, catalyzes the conversion of glucosamine-6-phosphate to glucosamine-1-phosphate. The polypeptide is Phosphoglucosamine mutase (Lawsonia intracellularis (strain PHE/MN1-00)).